An 824-amino-acid chain; its full sequence is Vesicle-fusing ATPase (824 aa).

ATP is bound by residues 582 to 587 (RGMIVW) and 622 to 629 (AKTGKTSL). Threonine 627 is a Mg(2+) binding site.

It belongs to the AAA ATPase family. Homohexamer. It depends on Mg(2+) as a cofactor.

It is found in the cytoplasm. It carries out the reaction ATP + H2O = ADP + phosphate + H(+). Functionally, required for vesicle-mediated transport. Catalyzes the fusion of transport vesicles within the Golgi cisternae. Is also required for transport from the endoplasmic reticulum to the Golgi stack. Seems to function as a fusion protein required for the delivery of cargo proteins to all compartments of the Golgi stack independent of vesicle origin. In Caenorhabditis elegans, this protein is Vesicle-fusing ATPase (nsf-1).